Consider the following 195-residue polypeptide: MTNYKKSKYSRDDRKHIAESIENLKNDEDYVAIFEILMDDESNSYTENSNGVFLNLSTVSDTTLDRISKYLNKINTQKNKHIEVDTDIIPTLINNKNERTYKLSNYEKNIIKQRNLRKAVDDDVDYEEFRFSNKKNIKSVKPNKLIETINTNRTNNTDNKSTKSKKQTETKKSLRTNKIVKQPINKSKKNIREEY.

The disordered stretch occupies residues 143 to 195 (NKLIETINTNRTNNTDNKSTKSKKQTETKKSLRTNKIVKQPINKSKKNIREEY). A compositionally biased stretch (low complexity) spans 148–159 (TINTNRTNNTDN).

This is an uncharacterized protein from Acanthamoeba polyphaga (Amoeba).